The chain runs to 130 residues: Type VII secretion system extracellular protein C (130 aa).

The protein belongs to the EsxC family. In terms of assembly, forms both homodimers and heterodimers with EsxA. Homodimerization is calcium-dependent.

The protein localises to the secreted. In terms of biological role, implements its pathogenic function during infection. The polypeptide is Type VII secretion system extracellular protein C (Staphylococcus aureus (strain Mu50 / ATCC 700699)).